A 488-amino-acid polypeptide reads, in one-letter code: Ribulose bisphosphate carboxylase large chain (488 aa).

Substrate is bound by residues asparagine 127 and threonine 177. Lysine 179 (proton acceptor) is an active-site residue. Lysine 181 is a substrate binding site. The Mg(2+) site is built by lysine 205, aspartate 207, and glutamate 208. Position 205 is an N6-carboxylysine (lysine 205). Residue histidine 297 is the Proton acceptor of the active site. Positions 298, 330, and 382 each coordinate substrate.

It belongs to the RuBisCO large chain family. Type I subfamily. In terms of assembly, heterohexadecamer of 8 large chains and 8 small chains. It depends on Mg(2+) as a cofactor.

The protein localises to the plastid. It localises to the chloroplast. It catalyses the reaction 2 (2R)-3-phosphoglycerate + 2 H(+) = D-ribulose 1,5-bisphosphate + CO2 + H2O. The catalysed reaction is D-ribulose 1,5-bisphosphate + O2 = 2-phosphoglycolate + (2R)-3-phosphoglycerate + 2 H(+). RuBisCO catalyzes two reactions: the carboxylation of D-ribulose 1,5-bisphosphate, the primary event in carbon dioxide fixation, as well as the oxidative fragmentation of the pentose substrate in the photorespiration process. Both reactions occur simultaneously and in competition at the same active site. This Gracilaria tenuistipitata var. liui (Red alga) protein is Ribulose bisphosphate carboxylase large chain.